The sequence spans 260 residues: Methylphosphonate hydroxylase (260 aa).

2-oxoglutarate is bound at residue Lys-107. The Fe cation site is built by His-117, Asp-119, and His-195.

This sequence belongs to the PhyH family. Fe(2+) serves as cofactor.

The enzyme catalyses methylphosphonate + 2-oxoglutarate + O2 = hydroxymethylphosphonate + succinate + CO2. In terms of biological role, part of an oxidative pathway for utilization of methylphosphonic acid as a phosphate source. Catalyzes the conversion of methylphosphonic acid to hydroxymethylphosphonic acid. Is specific for the hydroxylation of methylphosphonate. This is Methylphosphonate hydroxylase from Gimesia maris (strain ATCC 29201 / DSM 8797 / 534-30) (Planctomyces maris).